Consider the following 210-residue polypeptide: Ras-related protein RABC2a (210 aa).

20–27 (GDSGVGKS) provides a ligand contact to GTP. An Effector region motif is present at residues 41 to 49 (LAPTIGVDF). GTP is bound by residues 67 to 71 (DTAGQ), 127 to 130 (NKVD), and 157 to 158 (SA). 2 S-geranylgeranyl cysteine lipidation sites follow: Cys208 and Cys209.

This sequence belongs to the small GTPase superfamily. Rab family. As to quaternary structure, interacts with XI-2/MYA2.

The protein localises to the cell membrane. The protein resides in the cytoplasm. Intracellular vesicle trafficking and protein transport. The sequence is that of Ras-related protein RABC2a (RABC2A) from Arabidopsis thaliana (Mouse-ear cress).